The chain runs to 177 residues: MSEFVTVARPYAKAAFDFAVEHQAVERWQNMLAFTAQVTRNEQIAELLSGAVAPETMSTTFIAVCGDQLDEPAQNFIRVMAENGRLLVLPEVLQQFIQLRASLESTVDVEVSSARALNDEQLAKIAAAMEKRLSRKVKLNCKIDKSVMAGVVIRAGDMVIDGSVRGRLERLADVLQS.

This sequence belongs to the ATPase delta chain family. In terms of assembly, F-type ATPases have 2 components, F(1) - the catalytic core - and F(0) - the membrane proton channel. F(1) has five subunits: alpha(3), beta(3), gamma(1), delta(1), epsilon(1). F(0) has three main subunits: a(1), b(2) and c(10-14). The alpha and beta chains form an alternating ring which encloses part of the gamma chain. F(1) is attached to F(0) by a central stalk formed by the gamma and epsilon chains, while a peripheral stalk is formed by the delta and b chains.

Its subcellular location is the cell inner membrane. F(1)F(0) ATP synthase produces ATP from ADP in the presence of a proton or sodium gradient. F-type ATPases consist of two structural domains, F(1) containing the extramembraneous catalytic core and F(0) containing the membrane proton channel, linked together by a central stalk and a peripheral stalk. During catalysis, ATP synthesis in the catalytic domain of F(1) is coupled via a rotary mechanism of the central stalk subunits to proton translocation. In terms of biological role, this protein is part of the stalk that links CF(0) to CF(1). It either transmits conformational changes from CF(0) to CF(1) or is implicated in proton conduction. The protein is ATP synthase subunit delta of Yersinia pseudotuberculosis serotype O:1b (strain IP 31758).